A 159-amino-acid polypeptide reads, in one-letter code: 6,7-dimethyl-8-ribityllumazine synthase (159 aa).

Residues Trp-26, 58-60, and 80-82 contribute to the 5-amino-6-(D-ribitylamino)uracil site; these read SFE and VVI. 85-86 contacts (2S)-2-hydroxy-3-oxobutyl phosphate; the sequence is GT. The active-site Proton donor is the His-88. Residue Phe-113 participates in 5-amino-6-(D-ribitylamino)uracil binding. Arg-127 is a (2S)-2-hydroxy-3-oxobutyl phosphate binding site.

Belongs to the DMRL synthase family.

It catalyses the reaction (2S)-2-hydroxy-3-oxobutyl phosphate + 5-amino-6-(D-ribitylamino)uracil = 6,7-dimethyl-8-(1-D-ribityl)lumazine + phosphate + 2 H2O + H(+). Its pathway is cofactor biosynthesis; riboflavin biosynthesis; riboflavin from 2-hydroxy-3-oxobutyl phosphate and 5-amino-6-(D-ribitylamino)uracil: step 1/2. In terms of biological role, catalyzes the formation of 6,7-dimethyl-8-ribityllumazine by condensation of 5-amino-6-(D-ribitylamino)uracil with 3,4-dihydroxy-2-butanone 4-phosphate. This is the penultimate step in the biosynthesis of riboflavin. The sequence is that of 6,7-dimethyl-8-ribityllumazine synthase from Renibacterium salmoninarum (strain ATCC 33209 / DSM 20767 / JCM 11484 / NBRC 15589 / NCIMB 2235).